The following is a 359-amino-acid chain: Biotin synthase (359 aa).

The segment at 1 to 22 (MQSTPLNFVPNAAKAPVTPGQA) is disordered. Residues 58 to 285 (NAVQLSTLLS…KAMVRLSAGR (228 aa)) enclose the Radical SAM core domain. [4Fe-4S] cluster-binding residues include cysteine 73, cysteine 77, and cysteine 80. The [2Fe-2S] cluster site is built by cysteine 117, cysteine 148, cysteine 208, and arginine 280.

It belongs to the radical SAM superfamily. Biotin synthase family. As to quaternary structure, homodimer. [4Fe-4S] cluster serves as cofactor. [2Fe-2S] cluster is required as a cofactor.

The catalysed reaction is (4R,5S)-dethiobiotin + (sulfur carrier)-SH + 2 reduced [2Fe-2S]-[ferredoxin] + 2 S-adenosyl-L-methionine = (sulfur carrier)-H + biotin + 2 5'-deoxyadenosine + 2 L-methionine + 2 oxidized [2Fe-2S]-[ferredoxin]. Its pathway is cofactor biosynthesis; biotin biosynthesis; biotin from 7,8-diaminononanoate: step 2/2. Its function is as follows. Catalyzes the conversion of dethiobiotin (DTB) to biotin by the insertion of a sulfur atom into dethiobiotin via a radical-based mechanism. The sequence is that of Biotin synthase from Ralstonia pickettii (strain 12J).